The chain runs to 311 residues: HPr kinase/phosphorylase (311 aa).

Residues His138 and Lys159 contribute to the active site. 153-160 (GDSGIGKS) contacts ATP. Ser160 is a binding site for Mg(2+). Asp177 functions as the Proton acceptor; for phosphorylation activity. Proton donor; for dephosphorylation activity in the catalytic mechanism. The interval 201 to 210 (LEIRGVGIID) is important for the catalytic mechanism of both phosphorylation and dephosphorylation. Glu202 serves as a coordination point for Mg(2+). Residue Arg243 is part of the active site. The important for the catalytic mechanism of dephosphorylation stretch occupies residues 264–269 (PVKTGR).

This sequence belongs to the HPrK/P family. Homohexamer. Mg(2+) serves as cofactor.

It carries out the reaction [HPr protein]-L-serine + ATP = [HPr protein]-O-phospho-L-serine + ADP + H(+). The enzyme catalyses [HPr protein]-O-phospho-L-serine + phosphate + H(+) = [HPr protein]-L-serine + diphosphate. In terms of biological role, catalyzes the ATP- as well as the pyrophosphate-dependent phosphorylation of a specific serine residue in HPr, a phosphocarrier protein of the phosphoenolpyruvate-dependent sugar phosphotransferase system (PTS). HprK/P also catalyzes the pyrophosphate-producing, inorganic phosphate-dependent dephosphorylation (phosphorolysis) of seryl-phosphorylated HPr (P-Ser-HPr). The two antagonistic activities of HprK/P are regulated by several intracellular metabolites, which change their concentration in response to the absence or presence of rapidly metabolisable carbon sources (glucose, fructose, etc.) in the growth medium. Therefore, by controlling the phosphorylation state of HPr, HPrK/P is a sensor enzyme that plays a major role in the regulation of carbon metabolism and sugar transport: it mediates carbon catabolite repression (CCR), and regulates PTS-catalyzed carbohydrate uptake and inducer exclusion. The protein is HPr kinase/phosphorylase of Streptococcus agalactiae serotype Ia (strain ATCC 27591 / A909 / CDC SS700).